We begin with the raw amino-acid sequence, 339 residues long: D-glycero-alpha-D-manno-heptose 7-phosphate kinase (339 aa).

Residue 17–20 (GGTD) participates in substrate binding. ATP contacts are provided by residues serine 57 and 110 to 116 (GSGLGGS). Mg(2+)-binding residues include serine 116 and glutamate 148. The active-site Proton acceptor is the aspartate 160.

The protein belongs to the GHMP kinase family.

The enzyme catalyses D-glycero-alpha-D-manno-heptose 7-phosphate + ATP = D-glycero-alpha-D-manno-heptose 1,7-bisphosphate + ADP + H(+). Its pathway is nucleotide-sugar biosynthesis; GDP-D-glycero-alpha-D-manno-heptose biosynthesis; GDP-D-glycero-alpha-D-manno-heptose from D-glycero-alpha-D-manno-heptose 7-phosphate: step 1/3. It functions in the pathway capsule biogenesis; capsule polysaccharide biosynthesis. Functionally, catalyzes the phosphorylation of D-glycero-alpha-D-manno-heptose 7-phosphate at the C-1 position to form D-glycero-alpha-D-manno-heptose 1,7-bisphosphate. This Campylobacter jejuni subsp. jejuni serotype O:2 (strain ATCC 700819 / NCTC 11168) protein is D-glycero-alpha-D-manno-heptose 7-phosphate kinase.